Consider the following 115-residue polypeptide: NADH-ubiquinone oxidoreductase chain 3 (115 aa).

3 helical membrane passes run 3 to 23, 55 to 75, and 84 to 104; these read FALILMTNTLLALLLMIITFW, FFLVAITFLLFDLEIALLLPL, and LPLMVMSSLLLIIILTLSLAY.

The protein belongs to the complex I subunit 3 family. In terms of assembly, core subunit of respiratory chain NADH dehydrogenase (Complex I) which is composed of 45 different subunits. Interacts with TMEM186. Interacts with TMEM242.

It localises to the mitochondrion inner membrane. It carries out the reaction a ubiquinone + NADH + 5 H(+)(in) = a ubiquinol + NAD(+) + 4 H(+)(out). In terms of biological role, core subunit of the mitochondrial membrane respiratory chain NADH dehydrogenase (Complex I) which catalyzes electron transfer from NADH through the respiratory chain, using ubiquinone as an electron acceptor. Essential for the catalytic activity of complex I. This Gorilla gorilla gorilla (Western lowland gorilla) protein is NADH-ubiquinone oxidoreductase chain 3.